The following is a 227-amino-acid chain: Ribonuclease 3 (227 aa).

The region spanning 4–133 is the RNase III domain; sequence FETLEKLLGY…LIAAIYLDSN (130 aa). E46 contributes to the Mg(2+) binding site. D50 is a catalytic residue. N119 and E122 together coordinate Mg(2+). The active site involves E122. Positions 158–226 constitute a DRBM domain; that stretch reads DPKTALQEWA…ARDLLHRLQD (69 aa).

This sequence belongs to the ribonuclease III family. In terms of assembly, homodimer. The cofactor is Mg(2+).

The protein resides in the cytoplasm. The catalysed reaction is Endonucleolytic cleavage to 5'-phosphomonoester.. Functionally, digests double-stranded RNA. Involved in the processing of primary rRNA transcript to yield the immediate precursors to the large and small rRNAs (23S and 16S). Processes some mRNAs, and tRNAs when they are encoded in the rRNA operon. Processes pre-crRNA and tracrRNA of type II CRISPR loci if present in the organism. This Rickettsia akari (strain Hartford) protein is Ribonuclease 3.